A 188-amino-acid chain; its full sequence is Peptidyl-tRNA hydrolase (188 aa).

F15 serves as a coordination point for tRNA. H20 (proton acceptor) is an active-site residue. TRNA is bound by residues Y64, N66, and N112.

It belongs to the PTH family. In terms of assembly, monomer.

It localises to the cytoplasm. The catalysed reaction is an N-acyl-L-alpha-aminoacyl-tRNA + H2O = an N-acyl-L-amino acid + a tRNA + H(+). In terms of biological role, hydrolyzes ribosome-free peptidyl-tRNAs (with 1 or more amino acids incorporated), which drop off the ribosome during protein synthesis, or as a result of ribosome stalling. Catalyzes the release of premature peptidyl moieties from peptidyl-tRNA molecules trapped in stalled 50S ribosomal subunits, and thus maintains levels of free tRNAs and 50S ribosomes. The protein is Peptidyl-tRNA hydrolase of Borrelia duttonii (strain Ly).